The following is a 111-amino-acid chain: NADH-ubiquinone oxidoreductase chain 4 (111 aa).

The helical transmembrane segment at 35-55 (LITSLFSWLDITVFLTGLSAF) threads the bilayer.

Belongs to the complex I subunit 4 family.

Its subcellular location is the mitochondrion membrane. It carries out the reaction a ubiquinone + NADH + 5 H(+)(in) = a ubiquinol + NAD(+) + 4 H(+)(out). Functionally, core subunit of the mitochondrial membrane respiratory chain NADH dehydrogenase (Complex I) that is believed to belong to the minimal assembly required for catalysis. Complex I functions in the transfer of electrons from NADH to the respiratory chain. The immediate electron acceptor for the enzyme is believed to be ubiquinone. The protein is NADH-ubiquinone oxidoreductase chain 4 (MT-ND4) of Caiman crocodilus (Spectacled caiman).